Here is a 65-residue protein sequence, read N- to C-terminus: Sodium channel alpha-toxin Acra4 (65 aa).

Residues 2-63 (RDGYIVDDKN…PIKDPSYKCH (62 aa)) form the LCN-type CS-alpha/beta domain. Disulfide bonds link Cys-12–Cys-62, Cys-16–Cys-34, Cys-20–Cys-44, and Cys-24–Cys-46. Residue Arg-65 is a propeptide, removed by a carboxypeptidase.

The protein belongs to the long (4 C-C) scorpion toxin superfamily. Sodium channel inhibitor family. Alpha subfamily. Expressed by the venom gland.

It is found in the secreted. In terms of biological role, alpha toxins bind voltage-independently at site-3 of sodium channels (Nav) and inhibit the inactivation of the activated channels, thereby blocking neuronal transmission. Electrophysiological studies of this were performed using sodium-channels expressed in F11 cell culture, by patch-clamp recordings. Affinity of this toxin toward sodium channels in F11 cell line is in the order of 1 uM concentration. The sequence is that of Sodium channel alpha-toxin Acra4 from Androctonus crassicauda (Arabian fat-tailed scorpion).